The sequence spans 484 residues: L-aspartate oxidase (484 aa).

FAD contacts are provided by residues 11-14 (SGIS), lysine 33, 40-47 (NSMLAQGG), and aspartate 203. The active-site Proton donor/acceptor is the arginine 270. FAD contacts are provided by residues glutamate 352 and 368–369 (SL).

This sequence belongs to the FAD-dependent oxidoreductase 2 family. NadB subfamily. It depends on FAD as a cofactor.

The protein localises to the cytoplasm. It carries out the reaction L-aspartate + O2 = iminosuccinate + H2O2. It functions in the pathway cofactor biosynthesis; NAD(+) biosynthesis; iminoaspartate from L-aspartate (oxidase route): step 1/1. Its function is as follows. Catalyzes the oxidation of L-aspartate to iminoaspartate, the first step in the de novo biosynthesis of NAD(+). This chain is L-aspartate oxidase (nadB), found in Listeria monocytogenes serovar 1/2a (strain ATCC BAA-679 / EGD-e).